Reading from the N-terminus, the 86-residue chain is Dolichyl-diphosphooligosaccharide--protein glycosyltransferase subunit OST5 (86 aa).

The Lumenal segment spans residues 2–27 (TYEQLYKEFHSSKSFQPFIHLDTQPK). Residues 28–48 (FAICGLIVTLAVLSSALFAVG) traverse the membrane as a helical segment. Over 49–56 (SKSSYIKK) the chain is Cytoplasmic. The chain crosses the membrane as a helical span at residues 57 to 77 (LFFYTILSVIGSLFAGLTTVF). Residues 78 to 86 (ASNSFGVYV) are Lumenal-facing.

The protein belongs to the OST5 family. Component of the oligosaccharyltransferase (OST) complex, which appears to exist in two assemblies comprising OST1, OST2, OST4, OST5, STT3, SWP1, WPB1, and either OST3 or OST6. OST assembly occurs through the formation of 3 subcomplexes. Subcomplex 1 contains OST1 and OST5, subcomplex 2 contains STT3, OST3, and OST4, and subcomplex 3 contains OST2, WBP1, and SWP1.

Its subcellular location is the endoplasmic reticulum membrane. The protein operates within protein modification; protein glycosylation. In terms of biological role, subunit of the oligosaccharyl transferase (OST) complex that catalyzes the initial transfer of a defined glycan (Glc(3)Man(9)GlcNAc(2) in eukaryotes) from the lipid carrier dolichol-pyrophosphate to an asparagine residue within an Asn-X-Ser/Thr consensus motif in nascent polypeptide chains, the first step in protein N-glycosylation. N-glycosylation occurs cotranslationally and the complex associates with the Sec61 complex at the channel-forming translocon complex that mediates protein translocation across the endoplasmic reticulum (ER). All subunits are required for a maximal enzyme activity. This Saccharomyces cerevisiae (strain ATCC 204508 / S288c) (Baker's yeast) protein is Dolichyl-diphosphooligosaccharide--protein glycosyltransferase subunit OST5 (OST5).